The primary structure comprises 122 residues: Protein C10 (122 aa).

Belongs to the UPF0456 family.

Its subcellular location is the cytoplasm. In Danio rerio (Zebrafish), this protein is Protein C10.